The primary structure comprises 2798 residues: Nipped-B-like protein (2798 aa).

Polar residues-rich tracts occupy residues 128–173 (LSQN…QNSP) and 191–208 (HPSSYTTHPQMQQASVSS). The disordered stretch occupies residues 128-338 (LSQNSMHSSP…IKLGKDEKDQ (211 aa)). Serine 150 and serine 162 each carry phosphoserine. The segment covering 234-249 (HHADNPRHGSSDDYLH) has biased composition (basic and acidic residues). 9 positions are modified to phosphoserine: serine 243, serine 256, serine 274, serine 280, serine 284, serine 301, serine 306, serine 318, and serine 350. Residues 482-500 (RESAIERERFSKEVQDKDK) are compositionally biased toward basic and acidic residues. The disordered stretch occupies residues 482 to 940 (RESAIERERF…NKAEFPSYLL (459 aa)). The span at 523–534 (PASQETGSTGNG) shows a compositional bias: polar residues. Basic and acidic residues-rich tracts occupy residues 562-572 (DSIKKPEETKQ), 593-625 (PENHPETPKKKSDPELSKSEMKQNESRLSESKP), 634-663 (KSNESKLETKTETPTEELKQNENKTTESKQ), 672-685 (KQNENRPCDTKPND), and 694-899 (ENTK…DTNK). Phosphothreonine is present on residues threonine 713 and threonine 746. At serine 906 the chain carries Phosphoserine. Residues 908-933 (NSKDDKRTEGNRSKVDSNKAHTDNKA) are compositionally biased toward basic and acidic residues. A PxVxL motif motif is present at residues 990–1003 (NKGAKPVVVLQKLS). Disordered stretches follow at residues 1011-1041 (IKDREEKSRSSLKSIKNKPSKSNKGSIDQSV) and 1054-1186 (ESTM…TPEE). N6-acetyllysine is present on lysine 1076. 3 positions are modified to phosphoserine: serine 1083, serine 1084, and serine 1090. The segment covering 1083–1094 (SSDEDNDSDEAF) has biased composition (acidic residues). Basic and acidic residues predominate over residues 1103–1133 (KDDDKAWEYEERDRRSSGDHRRSGHSHDGRR). Phosphoserine is present on residues serine 1144, serine 1146, and serine 1148. Tyrosine 1153 is modified (phosphotyrosine). Serine 1154 carries the phosphoserine modification. Residues 1165 to 1176 (KMKKKEKQKKRK) show a composition bias toward basic residues. A Phosphothreonine modification is found at threonine 1183. Serine 1191 carries the post-translational modification Phosphoserine. Positions 1685-1705 (AMKSQKDEESSDATHHAKELE) are enriched in basic and acidic residues. Residues 1685-1706 (AMKSQKDEESSDATHHAKELET) form a disordered region. HEAT repeat units follow at residues 1761-1799 (AQSFDIYLTQILRVLGENAIAVRTKAMKCLSEVVAVDPS), 1837-1875 (PQLAEQYYDMLIERILDTGISVRKRVIKILRDICIEQPT), 1939-1978 (YDWFEQLLQNLLKSEEDSSYKPVKKACTQLVDNLVEHILK), 2221-2261 (VNLK…LKEM), and 2307-2345 (LIHPVQCVPYLIAMGTDPEPAMRNKADQQLVEIDKKYAG). Basic and acidic residues predominate over residues 2467 to 2483 (VKDKRKERKTSPAKENE). Disordered regions lie at residues 2467-2514 (VKDK…DDIN) and 2645-2690 (TSLL…DSTE). Residues serine 2487, serine 2503, serine 2505, serine 2507, serine 2509, serine 2646, and serine 2652 each carry the phosphoserine modification. Residues 2504-2513 (ESDSDSEDDI) are compositionally biased toward acidic residues. At threonine 2661 the chain carries Phosphothreonine. At serine 2666 the chain carries Phosphoserine.

Belongs to the SCC2/Nipped-B family. In terms of assembly, heterodimerizes with MAU2/SCC4 to form the cohesin loading complex. The NIPBL-MAU2 heterodimer interacts with the cohesin complex composed of SMC1A/B and SMC3 heterodimer, RAD21 and STAG1/SA1. NIPBL directly contacts all members of the complex, RAD21, SMC1A/B, SMC3 and STAG1. Interacts directly (via PxVxL motif) with CBX3 and CBX5. Interacts with ZNF609 (via N-terminus). Interacts with the multiprotein complex Integrator. Interacts with BRD4. Spermatocytes and oocytes (at protein level).

The protein localises to the nucleus. The protein resides in the chromosome. Functionally, plays an important role in the loading of the cohesin complex on to DNA. Forms a heterodimeric complex (also known as cohesin loading complex) with MAU2/SCC4 which mediates the loading of the cohesin complex onto chromatin. Plays a role in cohesin loading at sites of DNA damage. Its recruitment to double-strand breaks (DSBs) sites occurs in a CBX3-, RNF8- and RNF168-dependent manner whereas its recruitment to UV irradiation-induced DNA damage sites occurs in a ATM-, ATR-, RNF8- and RNF168-dependent manner. Along with ZNF609, promotes cortical neuron migration during brain development by regulating the transcription of crucial genes in this process. Preferentially binds promoters containing paused RNA polymerase II. Up-regulates the expression of SEMA3A, NRP1, PLXND1 and GABBR2 genes, among others. The sequence is that of Nipped-B-like protein (Nipbl) from Mus musculus (Mouse).